The primary structure comprises 458 residues: Histone acetyltransferase KAT8 (458 aa).

Low complexity-rich tracts occupy residues Met-1 to Thr-17 and Pro-25 to Ala-35. Positions Met-1–Glu-52 are disordered. Ala-2 carries the N-acetylalanine modification. Phosphoserine is present on residues Ser-37 and Ser-42. Residues Val-55–Ala-110 enclose the Tudor-knot domain. At Lys-113 the chain carries N6-acetyllysine. Residues Arg-140–Ile-149 carry the Nuclear localization signal motif. The 274-residue stretch at Thr-174–Pro-447 folds into the MYST-type HAT domain. The tract at residues Thr-174–Lys-458 is sufficient for interaction with KANSL1. The C2HC MYST-type zinc finger occupies Leu-207 to Trp-232. 4 residues coordinate Zn(2+): Cys-210, Cys-213, His-226, and Cys-230. N6-acetyllysine is present on Lys-274. Acetyl-CoA is bound by residues Ile-317, Thr-319, Arg-325, Arg-326, Gly-327, Gly-329, and Lys-330. The residue at position 348 (Ser-348) is a Phosphoserine. The active-site Proton donor/acceptor is Glu-350. Acetyl-CoA contacts are provided by Ser-354, Ser-363, Tyr-408, and Lys-432.

The protein belongs to the MYST (SAS/MOZ) family. In terms of assembly, component of a multisubunit histone acetyltransferase complex (MSL) at least composed of the MOF/KAT8, MSL1/hampin, MSL2L1 and MSL3L1. Component of the NSL complex at least composed of MOF/KAT8, KANSL1, KANSL2, KANSL3, MCRS1, PHF20, OGT1/OGT, WDR5 and HCFC1. Component of some MLL1/MLL complex, at least composed of the core components KMT2A/MLL1, ASH2L, HCFC1, WDR5 and RBBP5, as well as the facultative components BACC1, CHD8, E2F6, HSP70, INO80C, KANSL1, LAS1L, MAX, MCRS1, MGA, MOF/KAT8, PELP1, PHF20, PRP31, RING2, RUVB1/TIP49A, RUVB2/TIP49B, SENP3, TAF1, TAF4, TAF6, TAF7, TAF9 and TEX10. Interacts with the chromodomain of MORF4L1/MRG15. Interacts with ATM (via its Tudor-knot domain); possibly regulating the activity of ATM. Interacts with NELFD. Post-translationally, acetylation at Lys-274 facilitates cognate substrate Lys-binding and acetylation. Although considered as an autoacetylation event, acetylation at Lys-274 probably takes place via a non-enzymatic process following acetyl-CoA-binding, which primes KAT8 for cognate protein-lysine acetylation. In terms of tissue distribution, during oocyte development, expressed in both oocytes and granulosa cells.

The protein localises to the nucleus. The protein resides in the chromosome. It localises to the mitochondrion. The catalysed reaction is L-lysyl-[histone] + acetyl-CoA = N(6)-acetyl-L-lysyl-[histone] + CoA + H(+). It carries out the reaction L-lysyl-[protein] + acetyl-CoA = N(6)-acetyl-L-lysyl-[protein] + CoA + H(+). The enzyme catalyses propanoyl-CoA + L-lysyl-[protein] = N(6)-propanoyl-L-lysyl-[protein] + CoA + H(+). With respect to regulation, the acetyltransferase activity is inhibited by anacardic acid derivatives. Histone acetyltransferase that catalyzes histone H4 acetylation at 'Lys-5'- and 'Lys-8' (H4K5ac and H4K8ac) or 'Lys-16' (H4K16ac), depending on the context. Catalytic component of the MSL histone acetyltransferase complex, a multiprotein complex that mediates the majority of histone H4 acetylation at 'Lys-16' (H4K16ac), an epigenetic mark that prevents chromatin compaction. H4K16ac constitutes the only acetylation mark intergenerationally transmitted and regulates key biological processes, such as oogenesis, embryonic stem cell pluripotency, hematopoiesis or glucose metabolism. The MSL complex is required for chromosome stability and genome integrity by maintaining homeostatic levels of H4K16ac. The MSL complex is also involved in gene dosage by promoting up-regulation of genes expressed by the X chromosome. X up-regulation is required to compensate for autosomal biallelic expression. The MSL complex also participates in gene dosage compensation by promoting expression of Tsix non-coding RNA. As part of the NSL histone acetyltransferase complex, catalyzes histone H4 acetylation at 'Lys-5'- and 'Lys-8' (H4K5ac and H4K8ac) at transcription start sites and promotes transcription initiation. The NSL complex also acts as a regulator of gene expression in mitochondria: KAT8 associates with mitochondrial DNA and controls expression of respiratory genes in an acetyltransferase-dependent mechanism. Also functions as an acetyltransferase for non-histone targets, such as ALKBH5, COX17, IRF3, KDM1A/LSD1, LMNA, PAX7 or TP53/p53. Acts as an inhibitor of antiviral immunity by acetylating IRF3, preventing IRF3 recruitment to promoters. Acts as a regulator of asymmetric division in muscle stem cells by mediating acetylation of PAX7. As part of the NSL complex, acetylates TP53/p53 at 'Lys-120'. Acts as a regulator of epithelial-to-mesenchymal transition as part of the NSL complex by mediating acetylation of KDM1A/LSD1. The NSL complex is required for nuclear architecture maintenance by mediating acetylation of LMNA. Promotes mitochondrial integrity by catalyzing acetylation of COX17. In addition to protein acetyltransferase activity, able to mediate protein propionylation. The chain is Histone acetyltransferase KAT8 from Mus musculus (Mouse).